Reading from the N-terminus, the 416-residue chain is Homogentisate 1,2-dioxygenase (416 aa).

Catalysis depends on His275, which acts as the Proton acceptor. Positions 318 and 324 each coordinate Fe cation. Homogentisate is bound by residues Tyr333 and His354. His354 contributes to the Fe cation binding site.

This sequence belongs to the homogentisate dioxygenase family. In terms of assembly, hexamer; dimer of trimers. It depends on Fe cation as a cofactor.

It carries out the reaction homogentisate + O2 = 4-maleylacetoacetate + H(+). Its pathway is amino-acid degradation; L-phenylalanine degradation; acetoacetate and fumarate from L-phenylalanine: step 4/6. Involved in the catabolism of homogentisate (2,5-dihydroxyphenylacetate or 2,5-OH-PhAc), a central intermediate in the degradation of phenylalanine and tyrosine. Catalyzes the oxidative ring cleavage of the aromatic ring of homogentisate to yield maleylacetoacetate. This Legionella pneumophila subsp. pneumophila (strain Philadelphia 1 / ATCC 33152 / DSM 7513) protein is Homogentisate 1,2-dioxygenase.